Reading from the N-terminus, the 401-residue chain is Phosphoglycerate kinase (401 aa).

Substrate-binding positions include 29–31, R45, 69–72, R125, and R158; these read DFN and HLGR. ATP is bound by residues K209, E331, and 357 to 360; that span reads GGDT.

It belongs to the phosphoglycerate kinase family. As to quaternary structure, monomer.

It localises to the cytoplasm. It carries out the reaction (2R)-3-phosphoglycerate + ATP = (2R)-3-phospho-glyceroyl phosphate + ADP. It participates in carbohydrate degradation; glycolysis; pyruvate from D-glyceraldehyde 3-phosphate: step 2/5. The polypeptide is Phosphoglycerate kinase (Wolinella succinogenes (strain ATCC 29543 / DSM 1740 / CCUG 13145 / JCM 31913 / LMG 7466 / NCTC 11488 / FDC 602W) (Vibrio succinogenes)).